Consider the following 707-residue polypeptide: Coiled-coil domain-containing protein 177 (707 aa).

Disordered regions lie at residues 1–65 (MVDP…EGGR) and 183–294 (PSAG…SALT). Composition is skewed to low complexity over residues 38–49 (AASSASASASAA), 183–215 (PSAG…PSSA), and 243–258 (ALSS…YSGE). Ser311 is subject to Phosphoserine. A coiled-coil region spans residues 364–605 (GQWELQRVHA…LQHATQVAEE (242 aa)). 4 disordered regions span residues 372-426 (HAKQ…RSEE), 454-581 (KLQQ…EREH), 597-637 (QHAT…RDED), and 652-707 (ERSE…LDRK). Composition is skewed to basic and acidic residues over residues 377–392 (RERE…EQGR), 399–426 (VEER…RSEE), 454–484 (KLQQ…ERAQ), 491–514 (QRQE…RHEA), 543–581 (ENYE…EREH), 618–637 (RLEK…RDED), and 652–664 (ERSE…RRSA). Over residues 665–675 (LESARSTARAS) the composition is skewed to low complexity. Residues 677-707 (HVREKVREETNTRSFDRMVREAQLHASLDRK) are compositionally biased toward basic and acidic residues.

This chain is Coiled-coil domain-containing protein 177 (CCDC177), found in Homo sapiens (Human).